Reading from the N-terminus, the 110-residue chain is Thiosulfate sulfurtransferase GlpE (110 aa).

Residues 17-105 (KQEGAVVVDI…WRATYPAETA (89 aa)) enclose the Rhodanese domain. Cysteine 65 (cysteine persulfide intermediate) is an active-site residue.

This sequence belongs to the GlpE family.

It is found in the cytoplasm. It catalyses the reaction thiosulfate + hydrogen cyanide = thiocyanate + sulfite + 2 H(+). The enzyme catalyses thiosulfate + [thioredoxin]-dithiol = [thioredoxin]-disulfide + hydrogen sulfide + sulfite + 2 H(+). Functionally, transferase that catalyzes the transfer of sulfur from thiosulfate to thiophilic acceptors such as cyanide or dithiols. May function in a CysM-independent thiosulfate assimilation pathway by catalyzing the conversion of thiosulfate to sulfite, which can then be used for L-cysteine biosynthesis. This Pseudomonas putida (strain GB-1) protein is Thiosulfate sulfurtransferase GlpE.